The following is a 145-amino-acid chain: Probable thioredoxin-2 (145 aa).

In terms of domain architecture, Thioredoxin spans 39 to 144 (VFDIDSVEDF…LDDFIEDVLA (106 aa)). Catalysis depends on nucleophile residues cysteine 68 and cysteine 71. Cysteine 68 and cysteine 71 form a disulfide bridge.

This sequence belongs to the thioredoxin family.

Its function is as follows. Participates in various redox reactions through the reversible oxidation of its active center dithiol to a disulfide and catalyzes dithiol-disulfide exchange reactions. This chain is Probable thioredoxin-2 (trx-2), found in Caenorhabditis elegans.